Reading from the N-terminus, the 435-residue chain is Gamma-glutamyl phosphate reductase (435 aa).

It belongs to the gamma-glutamyl phosphate reductase family.

It is found in the cytoplasm. It carries out the reaction L-glutamate 5-semialdehyde + phosphate + NADP(+) = L-glutamyl 5-phosphate + NADPH + H(+). It functions in the pathway amino-acid biosynthesis; L-proline biosynthesis; L-glutamate 5-semialdehyde from L-glutamate: step 2/2. Its function is as follows. Catalyzes the NADPH-dependent reduction of L-glutamate 5-phosphate into L-glutamate 5-semialdehyde and phosphate. The product spontaneously undergoes cyclization to form 1-pyrroline-5-carboxylate. This Xylella fastidiosa (strain M12) protein is Gamma-glutamyl phosphate reductase.